Reading from the N-terminus, the 221-residue chain is MTIKAILTDIEGAAGPASFLKDILLPYAREHLGAFIAAHAEDDGIEEALEEAGRLMGGFSLKPDEAEALLQRWMKQGRNPTPLKIIQGRIWQQGYEAGAFTAEIFPDVAPSLGAWKNAGIRLFTYSSSSELAQRLWLGSAGAEVFEGFFDTRVGQKLEEESYKAIAEQLALPAAEILVLSGNEDELDAAKAAGLATALIAREGGGGGNHPVAADFASVTIG.

The protein belongs to the HAD-like hydrolase superfamily. MasA/MtnC family. As to quaternary structure, monomer. It depends on Mg(2+) as a cofactor.

It catalyses the reaction 5-methylsulfanyl-2,3-dioxopentyl phosphate + H2O = 1,2-dihydroxy-5-(methylsulfanyl)pent-1-en-3-one + phosphate. It participates in amino-acid biosynthesis; L-methionine biosynthesis via salvage pathway; L-methionine from S-methyl-5-thio-alpha-D-ribose 1-phosphate: step 3/6. The protein operates within amino-acid biosynthesis; L-methionine biosynthesis via salvage pathway; L-methionine from S-methyl-5-thio-alpha-D-ribose 1-phosphate: step 4/6. Its function is as follows. Bifunctional enzyme that catalyzes the enolization of 2,3-diketo-5-methylthiopentyl-1-phosphate (DK-MTP-1-P) into the intermediate 2-hydroxy-3-keto-5-methylthiopentenyl-1-phosphate (HK-MTPenyl-1-P), which is then dephosphorylated to form the acireductone 1,2-dihydroxy-3-keto-5-methylthiopentene (DHK-MTPene). The polypeptide is Enolase-phosphatase E1 (Xanthobacter autotrophicus (strain ATCC BAA-1158 / Py2)).